Reading from the N-terminus, the 267-residue chain is 5'-nucleotidase SurE (267 aa).

A divalent metal cation-binding residues include Asp9, Asp10, Ser40, and Asn97.

Belongs to the SurE nucleotidase family. A divalent metal cation serves as cofactor.

The protein resides in the cytoplasm. The catalysed reaction is a ribonucleoside 5'-phosphate + H2O = a ribonucleoside + phosphate. In terms of biological role, nucleotidase that shows phosphatase activity on nucleoside 5'-monophosphates. The sequence is that of 5'-nucleotidase SurE from Helicobacter pylori (strain ATCC 700392 / 26695) (Campylobacter pylori).